We begin with the raw amino-acid sequence, 267 residues long: Small ribosomal subunit protein uS2 (267 aa).

Positions Gly-222–Glu-267 are disordered. The span at Lys-223–Asp-240 shows a compositional bias: basic and acidic residues. A compositionally biased stretch (acidic residues) spans Glu-241–Glu-267.

The protein belongs to the universal ribosomal protein uS2 family.

This is Small ribosomal subunit protein uS2 from Campylobacter hominis (strain ATCC BAA-381 / DSM 21671 / CCUG 45161 / LMG 19568 / NCTC 13146 / CH001A).